The sequence spans 303 residues: Coenzyme PQQ synthesis protein B (303 aa).

It belongs to the PqqB family.

The protein operates within cofactor biosynthesis; pyrroloquinoline quinone biosynthesis. May be involved in the transport of PQQ or its precursor to the periplasm. This chain is Coenzyme PQQ synthesis protein B, found in Pseudomonas putida (strain W619).